Reading from the N-terminus, the 60-residue chain is Large ribosomal subunit protein uL30 (60 aa).

Belongs to the universal ribosomal protein uL30 family. Part of the 50S ribosomal subunit.

This Limosilactobacillus reuteri (strain DSM 20016) (Lactobacillus reuteri) protein is Large ribosomal subunit protein uL30.